Reading from the N-terminus, the 443-residue chain is ATP-dependent protease ATPase subunit HslU (443 aa).

Residues Ile18, 60 to 65, Asp256, Glu321, and Arg393 contribute to the ATP site; that span reads GVGKTE.

It belongs to the ClpX chaperone family. HslU subfamily. In terms of assembly, a double ring-shaped homohexamer of HslV is capped on each side by a ring-shaped HslU homohexamer. The assembly of the HslU/HslV complex is dependent on binding of ATP.

The protein localises to the cytoplasm. ATPase subunit of a proteasome-like degradation complex; this subunit has chaperone activity. The binding of ATP and its subsequent hydrolysis by HslU are essential for unfolding of protein substrates subsequently hydrolyzed by HslV. HslU recognizes the N-terminal part of its protein substrates and unfolds these before they are guided to HslV for hydrolysis. The chain is ATP-dependent protease ATPase subunit HslU from Citrobacter koseri (strain ATCC BAA-895 / CDC 4225-83 / SGSC4696).